Here is a 322-residue protein sequence, read N- to C-terminus: Ferredoxin--NADP reductase (322 aa).

Residues E37, Q45, Y50, I91, F128, and D290 each contribute to the FAD site.

This sequence belongs to the ferredoxin--NADP reductase type 2 family. Homodimer. The cofactor is FAD.

The enzyme catalyses 2 reduced [2Fe-2S]-[ferredoxin] + NADP(+) + H(+) = 2 oxidized [2Fe-2S]-[ferredoxin] + NADPH. This Malacoplasma penetrans (strain HF-2) (Mycoplasma penetrans) protein is Ferredoxin--NADP reductase.